The chain runs to 347 residues: Protein RecA (347 aa).

ATP is bound at residue 64–71 (GPESSGKT).

It belongs to the RecA family.

The protein localises to the cytoplasm. Functionally, can catalyze the hydrolysis of ATP in the presence of single-stranded DNA, the ATP-dependent uptake of single-stranded DNA by duplex DNA, and the ATP-dependent hybridization of homologous single-stranded DNAs. It interacts with LexA causing its activation and leading to its autocatalytic cleavage. This chain is Protein RecA, found in Bartonella bacilliformis (strain ATCC 35685 / KC583 / Herrer 020/F12,63).